A 423-amino-acid chain; its full sequence is Gamma-glutamyl phosphate reductase (423 aa).

This sequence belongs to the gamma-glutamyl phosphate reductase family.

It localises to the cytoplasm. The catalysed reaction is L-glutamate 5-semialdehyde + phosphate + NADP(+) = L-glutamyl 5-phosphate + NADPH + H(+). Its pathway is amino-acid biosynthesis; L-proline biosynthesis; L-glutamate 5-semialdehyde from L-glutamate: step 2/2. Functionally, catalyzes the NADPH-dependent reduction of L-glutamate 5-phosphate into L-glutamate 5-semialdehyde and phosphate. The product spontaneously undergoes cyclization to form 1-pyrroline-5-carboxylate. This chain is Gamma-glutamyl phosphate reductase, found in Burkholderia vietnamiensis (strain G4 / LMG 22486) (Burkholderia cepacia (strain R1808)).